The chain runs to 306 residues: tRNA dimethylallyltransferase (306 aa).

Position 15 to 22 (15 to 22 (GPTASGKS)) interacts with ATP. Substrate is bound at residue 17–22 (TASGKS). The segment at 40 to 43 (DSMQ) is interaction with substrate tRNA.

This sequence belongs to the IPP transferase family. As to quaternary structure, monomer. It depends on Mg(2+) as a cofactor.

It catalyses the reaction adenosine(37) in tRNA + dimethylallyl diphosphate = N(6)-dimethylallyladenosine(37) in tRNA + diphosphate. In terms of biological role, catalyzes the transfer of a dimethylallyl group onto the adenine at position 37 in tRNAs that read codons beginning with uridine, leading to the formation of N6-(dimethylallyl)adenosine (i(6)A). This is tRNA dimethylallyltransferase from Methylobacterium sp. (strain 4-46).